Here is a 130-residue protein sequence, read N- to C-terminus: Large ribosomal subunit protein bL20 (130 aa).

It belongs to the bacterial ribosomal protein bL20 family.

Binds directly to 23S ribosomal RNA and is necessary for the in vitro assembly process of the 50S ribosomal subunit. It is not involved in the protein synthesizing functions of that subunit. In Nocardioides sp. (strain ATCC BAA-499 / JS614), this protein is Large ribosomal subunit protein bL20.